The chain runs to 135 residues: ATP synthase epsilon chain, chloroplastic (135 aa).

The protein belongs to the ATPase epsilon chain family. As to quaternary structure, F-type ATPases have 2 components, CF(1) - the catalytic core - and CF(0) - the membrane proton channel. CF(1) has five subunits: alpha(3), beta(3), gamma(1), delta(1), epsilon(1). CF(0) has three main subunits: a, b and c.

The protein resides in the plastid. It localises to the chloroplast thylakoid membrane. Its function is as follows. Produces ATP from ADP in the presence of a proton gradient across the membrane. The polypeptide is ATP synthase epsilon chain, chloroplastic (Marchantia polymorpha (Common liverwort)).